A 217-amino-acid polypeptide reads, in one-letter code: MRAIENAAMAAGRATGLQLMERAGEAVAAAVPDWPAPRLAVVLCGPGNNGGDGFVVARLLAGRDWQVHVFASGWEAVFPELGPPGPVRAREGTDAVTNARRWRDEGGSCRPLTALAEVEAGRILVVDALLGIGQTRPCDDLLEPYWRARDGWDRAGAEVRTLSVDVPTGFDCDNGVALARRPFEADLVVSFHAEKPVHARLRAAGVTVAVADIGLSS.

The 217-residue stretch at 1-217 (MRAIENAAMA…VAVADIGLSS (217 aa)) folds into the YjeF N-terminal domain. Residue 48–52 (NNGGD) participates in (6S)-NADPHX binding. K(+) contacts are provided by N49 and D127. (6S)-NADPHX contacts are provided by residues 131–137 (GIGQTRP) and D165. T168 is a binding site for K(+).

It belongs to the NnrE/AIBP family. K(+) serves as cofactor.

It carries out the reaction (6R)-NADHX = (6S)-NADHX. The enzyme catalyses (6R)-NADPHX = (6S)-NADPHX. Functionally, catalyzes the epimerization of the S- and R-forms of NAD(P)HX, a damaged form of NAD(P)H that is a result of enzymatic or heat-dependent hydration. This is a prerequisite for the S-specific NAD(P)H-hydrate dehydratase to allow the repair of both epimers of NAD(P)HX. The chain is NAD(P)H-hydrate epimerase from Cereibacter sphaeroides (strain KD131 / KCTC 12085) (Rhodobacter sphaeroides).